Here is a 478-residue protein sequence, read N- to C-terminus: GDP-fucose protein O-fucosyltransferase 3 (478 aa).

The Cytoplasmic segment spans residues 1–8 (MVWIQRRR). A helical; Signal-anchor for type II membrane protein transmembrane segment spans residues 9-31 (LLASCLCITATVFLLVTLQVVVE). Residues 32–478 (LGKFERKKFK…QEFWALVFKD (447 aa)) are Lumenal-facing. Asn110 and Asn168 each carry an N-linked (GlcNAc...) asparagine glycan. Cysteines 389 and 392 form a disulfide.

The protein belongs to the glycosyltransferase 10 family.

The protein localises to the endoplasmic reticulum membrane. It carries out the reaction L-threonyl-[protein] + GDP-beta-L-fucose = 3-O-(alpha-L-fucosyl)-L-threonyl-[protein] + GDP + H(+). It catalyses the reaction L-seryl-[protein] + GDP-beta-L-fucose = 3-O-(alpha-L-fucosyl)-L-seryl-[protein] + GDP + H(+). It participates in protein modification; protein glycosylation. In terms of biological role, protein O-fucosyltransferase that specifically catalyzes O-fucosylation of serine or threonine residues in EMI domains of target proteins, such as MMRN1, MMRN2 and EMID1. Attaches fucose through an O-glycosidic linkage. O-fucosylation of EMI domain-containing proteins may be required for facilitating protein folding and secretion. May also show alpha-(1,3)-fucosyltransferase activity toward the innermost N-acetyl glucosamine (GlcNAc) residue in biantennary N-glycan acceptors. However, this was tested with a library of synthetic substrates and this activity is unsure in vivo. May be involved in biosynthesis of Lewis X-carrying biantennary N-glycans that regulate neuron stem cell self-renewal during brain development. In Canis lupus familiaris (Dog), this protein is GDP-fucose protein O-fucosyltransferase 3 (FUT10).